The sequence spans 474 residues: Capsid vertex component 1 (474 aa).

This sequence belongs to the herpesviridae CVC1 protein family. In terms of assembly, interacts (via C-terminus) with capsid vertex component 2/CVC2.

It is found in the virion. The protein localises to the host nucleus. Its function is as follows. Capsid vertex-specific component that plays a role during viral DNA encapsidation, assuring correct genome cleavage and presumably stabilizing capsids that contain full-length viral genomes. The protein is Capsid vertex component 1 of Alcelaphine herpesvirus 1 (strain C500) (AlHV-1).